A 203-amino-acid chain; its full sequence is Chromophore lyase CpcT/CpeT 3 (203 aa).

Belongs to the CpcT/CpeT biliprotein lyase family.

Functionally, covalently attaches a chromophore to Cys residue(s) of phycobiliproteins. The protein is Chromophore lyase CpcT/CpeT 3 of Gloeobacter violaceus (strain ATCC 29082 / PCC 7421).